We begin with the raw amino-acid sequence, 411 residues long: Putative BMP-2-inducible kinase-like protein (411 aa).

Disordered regions lie at residues 1–87 (MIAP…TQDI), 215–280 (SQQQ…RVSQ), and 392–411 (QQSQPVELDPFGAAPFPSKQ). 2 stretches are compositionally biased toward basic and acidic residues: residues 8–18 (SSEEEGQKDEE) and 53–68 (EKRSSDSDYEQAKAKY). Residues 47–71 (EDEEEEEKRSSDSDYEQAKAKYSDM) adopt a coiled-coil conformation. Basic residues-rich tracts occupy residues 220 to 234 (VKQRSLQKLSSRQRR) and 243 to 258 (NGKRHHGTPTSKKKTL).

The protein is Putative BMP-2-inducible kinase-like protein (BMP2KL) of Homo sapiens (Human).